A 309-amino-acid chain; its full sequence is Ribonuclease Z (309 aa).

The Zn(2+) site is built by His-63, His-65, Asp-67, His-68, His-145, Asp-216, and His-274. Residue Asp-67 is the Proton acceptor of the active site.

Belongs to the RNase Z family. Homodimer. Zn(2+) serves as cofactor.

The catalysed reaction is Endonucleolytic cleavage of RNA, removing extra 3' nucleotides from tRNA precursor, generating 3' termini of tRNAs. A 3'-hydroxy group is left at the tRNA terminus and a 5'-phosphoryl group is left at the trailer molecule.. Zinc phosphodiesterase, which displays some tRNA 3'-processing endonuclease activity. Probably involved in tRNA maturation, by removing a 3'-trailer from precursor tRNA. The chain is Ribonuclease Z from Streptococcus sanguinis (strain SK36).